We begin with the raw amino-acid sequence, 1337 residues long: Multidrug resistance protein fer6 (1337 aa).

The N-terminal stretch at 1-23 is a signal peptide; it reads MTPEASANWFSLCWFAWIDPILT. A glycan (N-linked (GlcNAc...) asparagine) is linked at N71. Helical transmembrane passes span 94–114 and 138–158; these read FWIGGLLKLLADVGTITSPLL and LGSGVGLAIGLFLVQALCVFL. Residues 95–386 enclose the ABC transmembrane type-1 1 domain; that stretch reads WIGGLLKLLA…LPIAWNAIVD (292 aa). N-linked (GlcNAc...) asparagine glycosylation occurs at N187. A run of 4 helical transmembrane segments spans residues 220-242, 247-269, 331-351, and 359-379; these read FFHMAWTSAVQIIICVALLIWSL, LPGIAVLVLMSPIQTAITKRLFA, ALAFATPTIATVLSFVTYALV, and ILFSSLSFFTLLRTPLQFLPI. In terms of domain architecture, ABC transporter 1 spans 417–667; it reads IQLEDASFTW…KGRVAELLLT (251 aa). Positions 432 to 460 are disordered; it reads ADTAKPVNEKKGQDSPSNEKETPVDRAST. Over residues 438-455 the composition is skewed to basic and acidic residues; that stretch reads VNEKKGQDSPSNEKETPV. A glycan (N-linked (GlcNAc...) asparagine) is linked at N465. Position 478–485 (478–485) interacts with ATP; that stretch reads GGVGSGKS. A disordered region spans residues 699-751; it reads GSASNRNSEASESTTTTVNAESKDTSNAEGVTNKTEKKDLVAPPAQAKSKALM. The segment covering 700–718 has biased composition (low complexity); the sequence is SASNRNSEASESTTTTVNA. N-linked (GlcNAc...) asparagine glycosylation occurs at N731. 6 helical membrane passes run 769–789, 817–837, 890–909, 915–933, 999–1019, and 1028–1048; these read YLNAAPLSILLPLFLVAVLVF, GIYAVFGITQSLGLLSMGVIF, AMRTLIGTIVQVIGSIVLIA, FLIPVAVILVLYFWIAAYY, LSVRLDFLGSLLILSVAILVV, and GETGVALSYILTAQSIFGWMI. In terms of domain architecture, ABC transmembrane type-1 2 spans 781-1056; that stretch reads LFLVAVLVFQ…MIRHAAELEN (276 aa). N1057 is a glycosylation site (N-linked (GlcNAc...) asparagine). Residues 1097 to 1325 enclose the ABC transporter 2 domain; it reads IRFEGVEAKY…EKGAFRALCD (229 aa). 1131 to 1138 is a binding site for ATP; sequence GRTGAGKS. N1227 is a glycosylation site (N-linked (GlcNAc...) asparagine).

Belongs to the ABC transporter superfamily. ABCC family. Conjugate transporter (TC 3.A.1.208) subfamily.

It is found in the membrane. Multidrug resistance protein; part of the gene cluster that mediates the biosynthesis of siderophore ferrichrome A which is contributing to organismal virulence. The protein is Multidrug resistance protein fer6 of Mycosarcoma maydis (Corn smut fungus).